The following is a 207-amino-acid chain: Small ribosomal subunit protein uS4 (207 aa).

Positions Lys-31–Gln-40 are enriched in basic and acidic residues. The segment at Lys-31–Leu-56 is disordered. Over residues Gly-42–Gly-53 the composition is skewed to polar residues. Residues Ser-97 to Glu-158 enclose the S4 RNA-binding domain.

This sequence belongs to the universal ribosomal protein uS4 family. In terms of assembly, part of the 30S ribosomal subunit. Contacts protein S5. The interaction surface between S4 and S5 is involved in control of translational fidelity.

Functionally, one of the primary rRNA binding proteins, it binds directly to 16S rRNA where it nucleates assembly of the body of the 30S subunit. With S5 and S12 plays an important role in translational accuracy. The chain is Small ribosomal subunit protein uS4 from Polynucleobacter necessarius subsp. necessarius (strain STIR1).